Reading from the N-terminus, the 281-residue chain is Cell growth regulator with EF hand domain protein 1 (281 aa).

The signal sequence occupies residues 1 to 21 (MFQWLMQALMLPLLLLPLGRA). EF-hand domains follow at residues 71–106 (DREQ…ALAP) and 115–150 (PVIL…PKHT). D84, D86, N88, Q90, E95, D128, D130, D132, and E139 together coordinate Ca(2+). The interval 148-281 (KHTESLPPAL…HSIQLENDEI (134 aa)) is disordered. Residues 168 to 183 (LLANSPLQSETQQSLG) show a composition bias toward polar residues. The span at 184–213 (TKEEIRGQVEAKRASLEPEQEAGHQTEGKV) shows a compositional bias: basic and acidic residues. 2 positions are modified to phosphoserine: S217 and S228. Residues 237–256 (EGAEEQVEIKDNEGEAKELL) are compositionally biased toward basic and acidic residues.

Post-translationally, probably digested extracellularly by an unknown serine protease generating extremely hydrophobic bioactive peptides.

Its subcellular location is the secreted. In terms of biological role, mediates cell-cell adhesion in a calcium-dependent manner. Able to inhibit growth in several cell lines. The polypeptide is Cell growth regulator with EF hand domain protein 1 (Mus musculus (Mouse)).